The following is a 123-amino-acid chain: Putative iron-sulfur cluster insertion protein ErpA (123 aa).

Residues C51, C115, and C117 each coordinate iron-sulfur cluster.

Belongs to the HesB/IscA family. As to quaternary structure, homodimer. Iron-sulfur cluster serves as cofactor.

In terms of biological role, required for insertion of 4Fe-4S clusters. This Burkholderia ambifaria (strain ATCC BAA-244 / DSM 16087 / CCUG 44356 / LMG 19182 / AMMD) (Burkholderia cepacia (strain AMMD)) protein is Putative iron-sulfur cluster insertion protein ErpA.